Here is an 89-residue protein sequence, read N- to C-terminus: Bombyxin B-2 (89 aa).

The signal sequence occupies residues 1-19; the sequence is MKTSVMFMLVFVISLMCSS. 3 cysteine pairs are disulfide-bonded: C29–C75, C41–C88, and C74–C79. Positions 48–66 are cleaved as a propeptide — c peptide like; the sequence is SGAQYAPYFWTRQYLGSRG.

This sequence belongs to the insulin family. Heterodimer of a B chain and an A chain linked by two disulfide bonds.

The protein resides in the secreted. Functionally, brain peptide responsible for activation of prothoracic glands to produce ecdysone in insects. The chain is Bombyxin B-2 (BBXB2) from Bombyx mori (Silk moth).